Here is a 376-residue protein sequence, read N- to C-terminus: MEVPRLSQHISTPNSPCEEMIKNLSLENIQLCERDGNKSQDSGIAEMEELPVPHNIKISNITCDSFKISWDMDPKSKDRITHYFIDLNKKENKNSNKFKHKDVPTKLVAKAVPLPMTVRGHWFLSPRTEYTVAVQTASKQVDGDYVVSEWSEIIEFCTADYSKVHLTQLMEKAEAIAGRMLKFSVFYRNQHKEYFDYIREHHGNVMQPSLKDNSGSHGSPISTKLEGIFFSCNTEFNTGKPPQDSPYGRYRVEVPAEKLFNPNTNLYFGDFYCMYTAYHYVILVIAPMGSPGDEFCKQRLPQLSLSDNKFLTCTQEHGGLVFHQAQDVILEVIYTDPVDLSWGTVAEIIGHQLMSLSTANAKKDPSCKTCNISVGR.

Residues 52-161 (VPHNIKISNI…EIIEFCTADY (110 aa)) enclose the Fibronectin type-III domain.

This sequence belongs to the PHYHIP family.

In terms of biological role, may play a role in the development of the central system. This is Phytanoyl-CoA hydroxylase-interacting protein-like (phyhipl) from Xenopus tropicalis (Western clawed frog).